Reading from the N-terminus, the 694-residue chain is Threonine--tRNA ligase (694 aa).

In terms of domain architecture, TGS spans 8-74; it reads NFVNTSVTTH…EETATFTAVP (67 aa). Positions 273-579 are catalytic; it reads DHRRLGTELD…LLEHYAGAFP (307 aa). 3 residues coordinate Zn(2+): C378, H429, and H556.

The protein belongs to the class-II aminoacyl-tRNA synthetase family. Homodimer. Requires Zn(2+) as cofactor.

The protein resides in the cytoplasm. The enzyme catalyses tRNA(Thr) + L-threonine + ATP = L-threonyl-tRNA(Thr) + AMP + diphosphate + H(+). In terms of biological role, catalyzes the attachment of threonine to tRNA(Thr) in a two-step reaction: L-threonine is first activated by ATP to form Thr-AMP and then transferred to the acceptor end of tRNA(Thr). Also edits incorrectly charged L-seryl-tRNA(Thr). This is Threonine--tRNA ligase from Corynebacterium efficiens (strain DSM 44549 / YS-314 / AJ 12310 / JCM 11189 / NBRC 100395).